The chain runs to 89 residues: Small ribosomal subunit protein uS15 (89 aa).

This sequence belongs to the universal ribosomal protein uS15 family. Part of the 30S ribosomal subunit. Forms a bridge to the 50S subunit in the 70S ribosome, contacting the 23S rRNA.

One of the primary rRNA binding proteins, it binds directly to 16S rRNA where it helps nucleate assembly of the platform of the 30S subunit by binding and bridging several RNA helices of the 16S rRNA. Functionally, forms an intersubunit bridge (bridge B4) with the 23S rRNA of the 50S subunit in the ribosome. The sequence is that of Small ribosomal subunit protein uS15 from Thermus thermophilus (strain ATCC BAA-163 / DSM 7039 / HB27).